Consider the following 608-residue polypeptide: MPSNYTQHVGNHDFTRATVVIIGAGVSGMCMAIDLLHRTPIRKFVILEQGSSVGGTWANNLYPGCASDVCSSLYSYSFEQRPDWAAEYPGQEEFLTYMTDVAQKHGLYKYIRFNSTVQEARWDDKQQQWKVKVALNSAKASEFHEQYELTTNFLVSAVGQLNVPSYPSISGLDDYTGKLIHSARWDWTYDFSGKRIGVIGNGASAIQIVPELAKTASHITIYQRSPKWLLPRSNKKIGAIQHFLLSYVPPLRWCKRILQMRYREWLYNVLVTPGTVPARQFEAQSQEWMKSQLPDKPELWDTLTPNYAIGCKRVLISDDFYAALNASHVDLNTRPIQRITATGVQTDDDEQEYDLIVLATGFRASEFLHPIRVYGAGGRSLEDIWKDGPRAYYGMTVEDVPNFGMLYGPNTNLGHNSVITMIEAQSRYLSTMIRAVADAKKKDQTLVIQPRPEVLREYNERVQKHLAETSFADPNCQSWYKTDEGLITNNWPSTVVRYQKEVSQVRWADFILKGSGSAAVAKKKATYVGRVKEEALVSNVTLFLGVALAAGGVYWRATSWWKWEVPLIDKVGDDGILYGSGKTAWTSRVCPGAHCASGLLRILSLRRA.

N4 is a glycosylation site (N-linked (GlcNAc...) asparagine). Residues A17 to H37 traverse the membrane as a helical segment. Residues T56–N59, D68–V69, and Y74 each bind FAD. Residue A66–D68 coordinates NADP(+). N114 carries N-linked (GlcNAc...) asparagine glycosylation. NADP(+) contacts are provided by residues N201–Q207 and R224–S225. A glycan (N-linked (GlcNAc...) asparagine) is linked at N325. The helical transmembrane segment at A535 to W555 threads the bilayer.

This sequence belongs to the FAD-binding monooxygenase family. The cofactor is FAD.

The protein localises to the membrane. In terms of biological role, non-reducing polyketide synthase; part of the gene cluster that mediates the biosynthesis of the bicoumarin kotanin. The non-reducing polyketide synthase ktnS first catalyzes the formation of the pentaketidic 4,7-dihydroxy-5-methylcoumarin from acetyl coenzyme A and 4 malonyl coenzyme A molecules. Further O-methylation by ktnB leads to the formation of 7-demethylsiderin. Then, an oxidative phenol coupling catalyzed by the cytochrome P450 monooxygenase ktnC forms the 8,8'-dimer P-orlandin via dimerization the monomeric precursor, 7-demethylsiderin. P-orlandin is subsequently O-methylated in a stepwise fashion to demethylkotanin and kotanin. The function of ktnD within the pathway has not been determined yet. In Aspergillus niger (strain ATCC MYA-4892 / CBS 513.88 / FGSC A1513), this protein is FAD-binding monooxygenase ktnD.